Here is a 198-residue protein sequence, read N- to C-terminus: MYAGIVQELIDELGRLPGIGPKSAQRIAFHILQTEAFDVTRLAEVLLEVRDKVRFCEICGNVSEQATCSICRDPRRDPALICVVEEAKDVVAIERTREFRGLYHVLGGAISPIDGVGPDDLRIRQLVQRLADGTVQEVIIATDPNLEGEATATYLSRLLTTLEVRVTRLASGLPVGGDLEYADEVTLGRAFEGRRQVS.

Residues 56-71 (CEICGNVSEQATCSIC) form a C4-type zinc finger. A Toprim domain is found at 79-174 (ALICVVEEAK…RVTRLASGLP (96 aa)).

The protein belongs to the RecR family.

Its function is as follows. May play a role in DNA repair. It seems to be involved in an RecBC-independent recombinational process of DNA repair. It may act with RecF and RecO. The polypeptide is Recombination protein RecR (Leifsonia xyli subsp. xyli (strain CTCB07)).